A 272-amino-acid chain; its full sequence is Dermonecrotic toxin LvSicTox-alphaIC1aiii (272 aa).

Histidine 4 is an active-site residue. Glutamate 24 and aspartate 26 together coordinate Mg(2+). Histidine 40 acts as the Nucleophile in catalysis. 2 disulfide bridges follow: cysteine 44-cysteine 50 and cysteine 46-cysteine 189. Residue aspartate 84 participates in Mg(2+) binding.

It belongs to the arthropod phospholipase D family. Class II subfamily. The cofactor is Mg(2+). In terms of tissue distribution, expressed by the venom gland.

The protein localises to the secreted. The catalysed reaction is an N-(acyl)-sphingosylphosphocholine = an N-(acyl)-sphingosyl-1,3-cyclic phosphate + choline. The enzyme catalyses an N-(acyl)-sphingosylphosphoethanolamine = an N-(acyl)-sphingosyl-1,3-cyclic phosphate + ethanolamine. It catalyses the reaction a 1-acyl-sn-glycero-3-phosphocholine = a 1-acyl-sn-glycero-2,3-cyclic phosphate + choline. It carries out the reaction a 1-acyl-sn-glycero-3-phosphoethanolamine = a 1-acyl-sn-glycero-2,3-cyclic phosphate + ethanolamine. In terms of biological role, dermonecrotic toxins cleave the phosphodiester linkage between the phosphate and headgroup of certain phospholipids (sphingolipid and lysolipid substrates), forming an alcohol (often choline) and a cyclic phosphate. This toxin acts on sphingomyelin (SM). It may also act on ceramide phosphoethanolamine (CPE), lysophosphatidylcholine (LPC) and lysophosphatidylethanolamine (LPE), but not on lysophosphatidylserine (LPS), and lysophosphatidylglycerol (LPG). It acts by transphosphatidylation, releasing exclusively cyclic phosphate products as second products. Induces dermonecrosis, hemolysis, increased vascular permeability, edema, inflammatory response, and platelet aggregation. This chain is Dermonecrotic toxin LvSicTox-alphaIC1aiii, found in Loxosceles variegata (Recluse spider).